A 118-amino-acid polypeptide reads, in one-letter code: MTQEKGKFAEQLALNYLKENGLALVMQNYHCRLGEIDLIMREGSYLVFIEVRSRSNMNFGGGLASITYEKKQKIIKATSHYMIKYRIQDKFPIRFDVISIDGKSNKITWLKNAFDAGC.

It belongs to the UPF0102 family.

The chain is UPF0102 protein lpp3065 from Legionella pneumophila (strain Paris).